Here is an 85-residue protein sequence, read N- to C-terminus: Phosphocarrier protein HPr (85 aa).

One can recognise an HPr domain in the interval 1-85; it reads MFQQEVTITA…HLVKLMAELE (85 aa). The active-site Pros-phosphohistidine intermediate is the H15.

It is found in the cytoplasm. Functionally, general (non sugar-specific) component of the phosphoenolpyruvate-dependent sugar phosphotransferase system (sugar PTS). This major carbohydrate active-transport system catalyzes the phosphorylation of incoming sugar substrates concomitantly with their translocation across the cell membrane. The phosphoryl group from phosphoenolpyruvate (PEP) is transferred to the phosphoryl carrier protein HPr by enzyme I. Phospho-HPr then transfers it to the PTS EIIA domain. This chain is Phosphocarrier protein HPr (ptsH), found in Klebsiella pneumoniae.